The chain runs to 586 residues: A-type ATP synthase subunit A (586 aa).

Residue 232–239 (GPFGSGKT) coordinates ATP.

The protein belongs to the ATPase alpha/beta chains family. Has multiple subunits with at least A(3), B(3), C, D, E, F, H, I and proteolipid K(x).

The protein resides in the cell membrane. The enzyme catalyses ATP + H2O + 4 H(+)(in) = ADP + phosphate + 5 H(+)(out). In terms of biological role, component of the A-type ATP synthase that produces ATP from ADP in the presence of a proton gradient across the membrane. The A chain is the catalytic subunit. The polypeptide is A-type ATP synthase subunit A (Methanococcus maripaludis (strain C7 / ATCC BAA-1331)).